Reading from the N-terminus, the 137-residue chain is MLQPKRTKFRKQQKGRNRGQALRGSQIDFGEYGLKAIGRGRITARQIEAARRAMTRHIKRGGKIWIRIFPDKPITQKPLEVRQGKGKGGVEFWAANIQPGRVLYEMEGVPEGVARRAFELAAAKLPIKTVFVTRAIM.

Positions 1–17 (MLQPKRTKFRKQQKGRN) are enriched in basic residues. Residues 1–21 (MLQPKRTKFRKQQKGRNRGQA) are disordered.

The protein belongs to the universal ribosomal protein uL16 family. In terms of assembly, part of the 50S ribosomal subunit.

Functionally, binds 23S rRNA and is also seen to make contacts with the A and possibly P site tRNAs. The chain is Large ribosomal subunit protein uL16 from Nitrosococcus oceani (strain ATCC 19707 / BCRC 17464 / JCM 30415 / NCIMB 11848 / C-107).